The chain runs to 194 residues: Putative manganese efflux pump MntP (194 aa).

Transmembrane regions (helical) follow at residues phenylalanine 3–cysteine 23, glycine 40–tyrosine 60, isoleucine 65–isoleucine 85, leucine 109–phenylalanine 129, isoleucine 134–leucine 154, and isoleucine 169–leucine 189.

It belongs to the MntP (TC 9.B.29) family.

It is found in the cell inner membrane. Probably functions as a manganese efflux pump. The chain is Putative manganese efflux pump MntP from Proteus mirabilis (strain HI4320).